A 72-amino-acid chain; its full sequence is uncharacterized protein (72 aa).

A helical membrane pass occupies residues 23 to 45 (ITNLLITTILLCFFNATTYWKLF).

The protein localises to the membrane. This is an uncharacterized protein from Schizosaccharomyces pombe (strain 972 / ATCC 24843) (Fission yeast).